The following is a 328-amino-acid chain: GTPase Obg (328 aa).

The Obg domain maps to 1–159 (MNFIDEVKIY…MWVQLSLKLL (159 aa)). Positions 160–327 (SDVGLVGLPN…IIKLALQTIK (168 aa)) constitute an OBG-type G domain. GTP contacts are provided by residues 166–173 (GLPNAGKS), 191–195 (FTTLV), 212–215 (DIPG), 279–282 (NKID), and 308–310 (STY). Mg(2+) contacts are provided by S173 and T193.

This sequence belongs to the TRAFAC class OBG-HflX-like GTPase superfamily. OBG GTPase family. Monomer. The cofactor is Mg(2+).

It localises to the cytoplasm. An essential GTPase which binds GTP, GDP and possibly (p)ppGpp with moderate affinity, with high nucleotide exchange rates and a fairly low GTP hydrolysis rate. Plays a role in control of the cell cycle, stress response, ribosome biogenesis and in those bacteria that undergo differentiation, in morphogenesis control. The sequence is that of GTPase Obg from Rickettsia bellii (strain RML369-C).